We begin with the raw amino-acid sequence, 387 residues long: Galactokinase (387 aa).

36–39 (EHTD) lines the substrate pocket. Residues Ser70 and 125-131 (GAGLSSS) contribute to the ATP site. Mg(2+)-binding residues include Ser131 and Glu163. The active-site Proton acceptor is the Asp175. Tyr227 provides a ligand contact to substrate.

This sequence belongs to the GHMP kinase family. GalK subfamily.

The protein localises to the cytoplasm. The catalysed reaction is alpha-D-galactose + ATP = alpha-D-galactose 1-phosphate + ADP + H(+). It functions in the pathway carbohydrate metabolism; galactose metabolism. Its function is as follows. Catalyzes the transfer of the gamma-phosphate of ATP to D-galactose to form alpha-D-galactose-1-phosphate (Gal-1-P). In Streptomyces coelicolor (strain ATCC BAA-471 / A3(2) / M145), this protein is Galactokinase.